The sequence spans 227 residues: Cytochrome c oxidase subunit 2 (227 aa).

Residues 1–14 lie on the Mitochondrial intermembrane side of the membrane; the sequence is MAYPFQLGLQDATS. Residues 15 to 45 traverse the membrane as a helical segment; that stretch reads PIMEELTNFHDHTLMIVFLISSLVLYIISLM. Residues 46–59 lie on the Mitochondrial matrix side of the membrane; it reads LTTKLTHTNTMDAQ. The chain crosses the membrane as a helical span at residues 60–87; that stretch reads EVETIWTILPAVILILIALPSLRILYMM. At 88–227 the chain is on the mitochondrial intermembrane side; that stretch reads DEINNPALTV…HFENWSASMI (140 aa). Cu cation-binding residues include His161, Cys196, Glu198, Cys200, His204, and Met207. A Mg(2+)-binding site is contributed by Glu198.

It belongs to the cytochrome c oxidase subunit 2 family. In terms of assembly, component of the cytochrome c oxidase (complex IV, CIV), a multisubunit enzyme composed of 14 subunits. The complex is composed of a catalytic core of 3 subunits MT-CO1, MT-CO2 and MT-CO3, encoded in the mitochondrial DNA, and 11 supernumerary subunits COX4I, COX5A, COX5B, COX6A, COX6B, COX6C, COX7A, COX7B, COX7C, COX8 and NDUFA4, which are encoded in the nuclear genome. The complex exists as a monomer or a dimer and forms supercomplexes (SCs) in the inner mitochondrial membrane with NADH-ubiquinone oxidoreductase (complex I, CI) and ubiquinol-cytochrome c oxidoreductase (cytochrome b-c1 complex, complex III, CIII), resulting in different assemblies (supercomplex SCI(1)III(2)IV(1) and megacomplex MCI(2)III(2)IV(2)). Found in a complex with TMEM177, COA6, COX18, COX20, SCO1 and SCO2. Interacts with TMEM177 in a COX20-dependent manner. Interacts with COX20. Interacts with COX16. Cu cation serves as cofactor.

The protein localises to the mitochondrion inner membrane. It catalyses the reaction 4 Fe(II)-[cytochrome c] + O2 + 8 H(+)(in) = 4 Fe(III)-[cytochrome c] + 2 H2O + 4 H(+)(out). Component of the cytochrome c oxidase, the last enzyme in the mitochondrial electron transport chain which drives oxidative phosphorylation. The respiratory chain contains 3 multisubunit complexes succinate dehydrogenase (complex II, CII), ubiquinol-cytochrome c oxidoreductase (cytochrome b-c1 complex, complex III, CIII) and cytochrome c oxidase (complex IV, CIV), that cooperate to transfer electrons derived from NADH and succinate to molecular oxygen, creating an electrochemical gradient over the inner membrane that drives transmembrane transport and the ATP synthase. Cytochrome c oxidase is the component of the respiratory chain that catalyzes the reduction of oxygen to water. Electrons originating from reduced cytochrome c in the intermembrane space (IMS) are transferred via the dinuclear copper A center (CU(A)) of subunit 2 and heme A of subunit 1 to the active site in subunit 1, a binuclear center (BNC) formed by heme A3 and copper B (CU(B)). The BNC reduces molecular oxygen to 2 water molecules using 4 electrons from cytochrome c in the IMS and 4 protons from the mitochondrial matrix. The polypeptide is Cytochrome c oxidase subunit 2 (MT-CO2) (Sundamys muelleri (Mueller's giant sunda rat)).